The following is a 317-amino-acid chain: Melanocyte-stimulating hormone receptor (317 aa).

Residues Met-1–Glu-37 lie on the Extracellular side of the membrane. Asn-29 carries N-linked (GlcNAc...) asparagine glycosylation. Residues Val-38–Ile-63 traverse the membrane as a helical segment. The Cytoplasmic portion of the chain corresponds to Ala-64–Pro-72. The chain crosses the membrane as a helical span at residues Met-73–Leu-93. At Glu-94–Asn-118 the chain is on the extracellular side. Residues Thr-119–Val-140 form a helical membrane-spanning segment. The Cytoplasmic segment spans residues Asp-141–Arg-163. Residues Ala-164 to Cys-183 form a helical membrane-spanning segment. At Asp-184 to Cys-191 the chain is on the extracellular side. A helical transmembrane segment spans residues Leu-192–Leu-211. Topologically, residues Ala-212–Ala-240 are cytoplasmic. The chain crosses the membrane as a helical span at residues Ala-241–Leu-266. Topologically, residues Cys-267–Asn-279 are extracellular. The helical transmembrane segment at Phe-280 to Phe-300 threads the bilayer. Residues Arg-301–Trp-317 are Cytoplasmic-facing. Cys-315 carries the S-palmitoyl cysteine lipid modification.

This sequence belongs to the G-protein coupled receptor 1 family. As to quaternary structure, interacts with MGRN1, but does not undergo MGRN1-mediated ubiquitination; this interaction competes with GNAS-binding and thus inhibits agonist-induced cAMP production. Interacts with OPN3; the interaction results in a decrease in MC1R-mediated cAMP signaling and ultimately a decrease in melanin production in melanocytes.

Its subcellular location is the cell membrane. In terms of biological role, receptor for MSH (alpha, beta and gamma) and ACTH. The activity of this receptor is mediated by G proteins which activate adenylate cyclase. Mediates melanogenesis, the production of eumelanin (black/brown) and phaeomelanin (red/yellow), via regulation of cAMP signaling in melanocytes. In Alouatta pigra (Guatemalan howler monkey), this protein is Melanocyte-stimulating hormone receptor (MC1R).